The primary structure comprises 347 residues: Bombesin receptor-activated protein C6orf89 (347 aa).

Residues 1-58 (MDLAANEISIYDKLSETVDLVRQTGHQCGMSEKAIEKFIRQLLEKNEPQRPPPQYPLL) are Cytoplasmic-facing. Residues 59–79 (IVVYKVLATLGLILLTAYFVI) traverse the membrane as a helical segment. Residues 80–347 (QPFSPLAPEP…ICDGTAFSEL (268 aa)) lie on the Extracellular side of the membrane.

As to quaternary structure, homodimer. Interacts with BRS3. Interacts (via N-terminus) with SIN3B. Post-translationally, glycosylated.

The protein resides in the golgi apparatus membrane. It is found in the midbody. Its subcellular location is the cytoplasm. It localises to the nucleus. The protein localises to the nucleolus. Its function is as follows. Exhibits histone deacetylase (HDAC) enhancer properties. May play a role in cell cycle progression and wound repair of bronchial epithelial cells. This is Bombesin receptor-activated protein C6orf89 (C6orf89) from Homo sapiens (Human).